A 231-amino-acid chain; its full sequence is Probable pyridoxamine 5'-phosphate oxidase (231 aa).

20–23 (QYEK) contributes to the pyridoxal 5'-phosphate binding site. 74 to 77 (RLVL) lines the FMN pocket. Position 79 (Lys-79) interacts with pyridoxal 5'-phosphate. Residues 89–90 (FT), 96–97 (KK), and Gln-119 contribute to the FMN site. Pyridoxal 5'-phosphate-binding residues include Tyr-137, Arg-141, and Ser-145. Residues 154 to 155 (QS) and Trp-202 each bind FMN. 208 to 210 (RLH) serves as a coordination point for pyridoxal 5'-phosphate. Arg-212 contacts FMN.

Belongs to the pyridoxamine 5'-phosphate oxidase family. Homodimer. FMN serves as cofactor.

The enzyme catalyses pyridoxamine 5'-phosphate + O2 + H2O = pyridoxal 5'-phosphate + H2O2 + NH4(+). It catalyses the reaction pyridoxine 5'-phosphate + O2 = pyridoxal 5'-phosphate + H2O2. It functions in the pathway cofactor metabolism; pyridoxal 5'-phosphate salvage; pyridoxal 5'-phosphate from pyridoxamine 5'-phosphate: step 1/1. Its pathway is cofactor metabolism; pyridoxal 5'-phosphate salvage; pyridoxal 5'-phosphate from pyridoxine 5'-phosphate: step 1/1. Functionally, catalyzes the oxidation of either pyridoxine 5'-phosphate (PNP) or pyridoxamine 5'-phosphate (PMP) into pyridoxal 5'-phosphate (PLP). The protein is Probable pyridoxamine 5'-phosphate oxidase of Schizosaccharomyces pombe (strain 972 / ATCC 24843) (Fission yeast).